Consider the following 170-residue polypeptide: Ribosome maturation factor RimM (170 aa).

Positions 98 to 170 (PDEYYWVDLE…LIVVDWDPDF (73 aa)) constitute a PRC barrel domain.

Belongs to the RimM family. In terms of assembly, binds ribosomal protein uS19.

The protein localises to the cytoplasm. An accessory protein needed during the final step in the assembly of 30S ribosomal subunit, possibly for assembly of the head region. Essential for efficient processing of 16S rRNA. May be needed both before and after RbfA during the maturation of 16S rRNA. It has affinity for free ribosomal 30S subunits but not for 70S ribosomes. In Xanthomonas campestris pv. campestris (strain 8004), this protein is Ribosome maturation factor RimM.